A 390-amino-acid polypeptide reads, in one-letter code: Galactokinase (390 aa).

34–37 (EHTD) provides a ligand contact to substrate. ATP-binding positions include serine 68 and 122–128 (GSGLSSS). Positions 128 and 160 each coordinate Mg(2+). The active-site Proton acceptor is aspartate 172. Tyrosine 221 provides a ligand contact to substrate.

This sequence belongs to the GHMP kinase family. GalK subfamily.

It is found in the cytoplasm. It catalyses the reaction alpha-D-galactose + ATP = alpha-D-galactose 1-phosphate + ADP + H(+). The protein operates within carbohydrate metabolism; galactose metabolism. In terms of biological role, catalyzes the transfer of the gamma-phosphate of ATP to D-galactose to form alpha-D-galactose-1-phosphate (Gal-1-P). This is Galactokinase from Chloroflexus aggregans (strain MD-66 / DSM 9485).